The following is a 265-amino-acid chain: Shikimate dehydrogenase (NADP(+)) (265 aa).

Shikimate contacts are provided by residues 15 to 17 and Thr-62; that span reads SLS. Residue Lys-66 is the Proton acceptor of the active site. Residues Asn-87 and Asp-102 each coordinate shikimate. NADP(+) contacts are provided by residues 125–129, 149–154, and Leu-209; these read GAGGA and NRTLEK. Position 211 (Tyr-211) interacts with shikimate. Residue Gly-233 coordinates NADP(+).

This sequence belongs to the shikimate dehydrogenase family. As to quaternary structure, homodimer.

The enzyme catalyses shikimate + NADP(+) = 3-dehydroshikimate + NADPH + H(+). It functions in the pathway metabolic intermediate biosynthesis; chorismate biosynthesis; chorismate from D-erythrose 4-phosphate and phosphoenolpyruvate: step 4/7. Functionally, involved in the biosynthesis of the chorismate, which leads to the biosynthesis of aromatic amino acids. Catalyzes the reversible NADPH linked reduction of 3-dehydroshikimate (DHSA) to yield shikimate (SA). The chain is Shikimate dehydrogenase (NADP(+)) from Legionella pneumophila (strain Lens).